We begin with the raw amino-acid sequence, 374 residues long: Phosphate acyltransferase (374 aa).

The disordered stretch occupies residues 323-374 (AEMVDPREPESNPRRRTRPLQVYSGSGPEVLPLGSLERTSSRCPEPVEDAQP). Residues 326–335 (VDPREPESNP) show a composition bias toward basic and acidic residues.

This sequence belongs to the PlsX family. Homodimer. Probably interacts with PlsY.

The protein localises to the cytoplasm. The enzyme catalyses a fatty acyl-[ACP] + phosphate = an acyl phosphate + holo-[ACP]. Its pathway is lipid metabolism; phospholipid metabolism. Functionally, catalyzes the reversible formation of acyl-phosphate (acyl-PO(4)) from acyl-[acyl-carrier-protein] (acyl-ACP). This enzyme utilizes acyl-ACP as fatty acyl donor, but not acyl-CoA. This is Phosphate acyltransferase from Synechococcus sp. (strain JA-2-3B'a(2-13)) (Cyanobacteria bacterium Yellowstone B-Prime).